The following is a 427-amino-acid chain: Glutamate-1-semialdehyde 2,1-aminomutase (427 aa).

Lys265 is subject to N6-(pyridoxal phosphate)lysine.

The protein belongs to the class-III pyridoxal-phosphate-dependent aminotransferase family. HemL subfamily. Homodimer. The cofactor is pyridoxal 5'-phosphate.

It localises to the cytoplasm. It catalyses the reaction (S)-4-amino-5-oxopentanoate = 5-aminolevulinate. It functions in the pathway porphyrin-containing compound metabolism; protoporphyrin-IX biosynthesis; 5-aminolevulinate from L-glutamyl-tRNA(Glu): step 2/2. The protein is Glutamate-1-semialdehyde 2,1-aminomutase of Pseudomonas putida (strain GB-1).